The following is a 437-amino-acid chain: Putative metabolite transport protein NicT (437 aa).

The next 12 membrane-spanning stretches (helical) occupy residues 28–48 (LIPF…NVGF), 66–86 (LGAG…NLIL), 93–113 (LWIA…MFVT), 123–143 (FLLG…LTMW), 152–172 (IIAL…PISG), 189–209 (WLFL…FWAL), 254–274 (VWML…MGFW), 290–310 (IGLL…MIGA), 320–340 (WHII…TLFS), 347–367 (VVLF…FFSL), 374–394 (GTAA…AGLV), and 411–431 (AALW…IALP).

Belongs to the major facilitator superfamily.

It localises to the membrane. In terms of biological role, probable transporter, possibly involved in the aerobic nicotinate degradation pathway. The polypeptide is Putative metabolite transport protein NicT (nicT) (Pseudomonas putida (strain ATCC 47054 / DSM 6125 / CFBP 8728 / NCIMB 11950 / KT2440)).